The following is a 312-amino-acid chain: Taste receptor type 2 member 7 (312 aa).

Over Met1–Leu9 the chain is Extracellular. A helical membrane pass occupies residues Met10–Val30. The Cytoplasmic segment spans residues Asn31–Ser49. The helical transmembrane segment at Ser50–Val70 threads the bilayer. The Extracellular portion of the chain corresponds to Gln71–Thr101. Residues Cys102–Ile122 traverse the membrane as a helical segment. Residues Lys123–Lys128 are Cytoplasmic-facing. A helical membrane pass occupies residues Leu129–Thr149. Over Glu150–Asn187 the chain is Extracellular. Residues Asn151 and Asn167 are each glycosylated (N-linked (GlcNAc...) asparagine). A helical membrane pass occupies residues Leu188–Leu208. The Cytoplasmic portion of the chain corresponds to Trp209 to Lys235. Residues Ala236–Ser256 traverse the membrane as a helical segment. Over Ser257–Ala266 the chain is Extracellular. The helical transmembrane segment at Val267–Leu287 threads the bilayer. The Cytoplasmic portion of the chain corresponds to Gly288 to Tyr312.

Belongs to the G-protein coupled receptor T2R family. Expressed in subsets of taste receptor cells of the tongue and palate epithelium and exclusively in gustducin-positive cells. Expressed in 15% taste bud cells in circumvallate and foliate papillae but only in 2% in fungiform papillae. Expressed in gastric and duodenal tissues.

It localises to the membrane. In terms of biological role, gustducin-coupled receptor implicated in the perception of bitter compounds in the oral cavity and the gastrointestinal tract. Signals through PLCB2 and the calcium-regulated cation channel TRPM5. The sequence is that of Taste receptor type 2 member 7 (Tas2r7) from Mus musculus (Mouse).